Reading from the N-terminus, the 153-residue chain is Large ribosomal subunit protein uL30 (153 aa).

Belongs to the universal ribosomal protein uL30 family. Part of the 50S ribosomal subunit.

The sequence is that of Large ribosomal subunit protein uL30 from Methanosarcina acetivorans (strain ATCC 35395 / DSM 2834 / JCM 12185 / C2A).